Reading from the N-terminus, the 404-residue chain is Glucose-1-phosphate adenylyltransferase 2 (404 aa).

Alpha-D-glucose 1-phosphate-binding positions include Y97, G162, 177 to 178 (EK), and S195.

It belongs to the bacterial/plant glucose-1-phosphate adenylyltransferase family. As to quaternary structure, homotetramer.

The enzyme catalyses alpha-D-glucose 1-phosphate + ATP + H(+) = ADP-alpha-D-glucose + diphosphate. It participates in glycan biosynthesis; glycogen biosynthesis. Functionally, involved in the biosynthesis of ADP-glucose, a building block required for the elongation reactions to produce glycogen. Catalyzes the reaction between ATP and alpha-D-glucose 1-phosphate (G1P) to produce pyrophosphate and ADP-Glc. This Vibrio vulnificus (strain CMCP6) protein is Glucose-1-phosphate adenylyltransferase 2.